The sequence spans 166 residues: Phospholipase A2 inhibitor CgMIP-II (166 aa).

Positions Met1–Gly19 are cleaved as a signal peptide. Residues Leu46–Glu161 enclose the C-type lectin domain. 2 disulfides stabilise this stretch: Cys83-Cys160 and Cys138-Cys152. An N-linked (GlcNAc...) asparagine glycan is attached at Asn122.

It belongs to the alpha-type phospholipase A2 inhibitor family. As to quaternary structure, homomer composed of 20-25-kDa subunits that form oligomers of 180 kDa. Post-translationally, N-glycosylated. The glycosidic chain may contain superficial sialic acid residues. In terms of tissue distribution, expressed by the liver.

The protein localises to the secreted. In terms of biological role, selectively inhibits the toxic properties of myotoxin-II from the same venom (AC P81165). Does not inhibit PLA2, anti-coagulant and lethal activities of the basic myotoxin I from the same venom (AC P0DQP6), nor the different crotoxin forms (heterodimer or subunit B alone). Does not block the enzymatic activity of crude acidic PLA2 fractions from the same venom. This is Phospholipase A2 inhibitor CgMIP-II from Cerrophidion godmani (Porthidium godmani).